Consider the following 188-residue polypeptide: Adenine phosphoribosyltransferase (188 aa).

The protein belongs to the purine/pyrimidine phosphoribosyltransferase family. In terms of assembly, homodimer.

The protein resides in the cytoplasm. The catalysed reaction is AMP + diphosphate = 5-phospho-alpha-D-ribose 1-diphosphate + adenine. It functions in the pathway purine metabolism; AMP biosynthesis via salvage pathway; AMP from adenine: step 1/1. Functionally, catalyzes a salvage reaction resulting in the formation of AMP, that is energically less costly than de novo synthesis. The sequence is that of Adenine phosphoribosyltransferase from Frankia casuarinae (strain DSM 45818 / CECT 9043 / HFP020203 / CcI3).